A 132-amino-acid chain; its full sequence is Large ribosomal subunit protein bL17 (132 aa).

The protein belongs to the bacterial ribosomal protein bL17 family. As to quaternary structure, part of the 50S ribosomal subunit. Contacts protein L32.

The polypeptide is Large ribosomal subunit protein bL17 (Shewanella sediminis (strain HAW-EB3)).